The chain runs to 169 residues: Group 2 truncated hemoglobin 3-2 (169 aa).

His-99 lines the heme b pocket.

This sequence belongs to the truncated hemoglobin family. Group II subfamily. Homodimer when ferric.

Functionally, hemoglobin-like protein that exhibits an unusual concentration-independent binding of O(2) and CO. Required for general plant development and during nodulation. May promote shoot organogenesis from root explants. The sequence is that of Group 2 truncated hemoglobin 3-2 from Medicago truncatula (Barrel medic).